The primary structure comprises 219 residues: Small ribosomal subunit protein uS3c (219 aa).

Positions 43–118 constitute a KH type-2 domain; that stretch reads IKNYVQNNMI…KLNITITRIE (76 aa).

The protein belongs to the universal ribosomal protein uS3 family. In terms of assembly, part of the 30S ribosomal subunit.

The protein resides in the plastid. The polypeptide is Small ribosomal subunit protein uS3c (rps3) (Cuscuta exaltata (Tall dodder)).